The chain runs to 316 residues: MTSKNPIQKALYLAFERAQWSVLRDAVPMTLSEQDLENLRGINEKVSLSEVTDIYLPLSRLLNLIVKSKQQRGLVLDEFLGQKPSSSPYIISIAGSVAVGKSTTARILQALLRHWPEHPKVDLVTTDGFLYPLADLKRKGLLQRKGFPESYDMKMLVEFISAVKSGQAHVNAPIYSHVTYDRIRGQHQTVSQPDILILEGLNVLQTGLDSPVDIRRPFVSDFVDFSIYVDAEEHLLKQWYQERFLQFRKGAFSDEKSYFHHYASLTDDEANAIAAKIWDTINGPNLQLNIQPTRERAHLILQKGQDHLMSHVLLRK.

95–102 (GSVAVGKS) serves as a coordination point for ATP.

The protein belongs to the prokaryotic pantothenate kinase family.

The protein localises to the cytoplasm. It carries out the reaction (R)-pantothenate + ATP = (R)-4'-phosphopantothenate + ADP + H(+). It participates in cofactor biosynthesis; coenzyme A biosynthesis; CoA from (R)-pantothenate: step 1/5. The sequence is that of Pantothenate kinase from Shewanella sp. (strain ANA-3).